Consider the following 166-residue polypeptide: Ribosome-binding factor A (166 aa).

A disordered region spans residues valine 119–histidine 166. Residues glutamate 143–aspartate 154 are compositionally biased toward acidic residues.

The protein belongs to the RbfA family. Monomer. Binds 30S ribosomal subunits, but not 50S ribosomal subunits or 70S ribosomes.

The protein resides in the cytoplasm. One of several proteins that assist in the late maturation steps of the functional core of the 30S ribosomal subunit. Associates with free 30S ribosomal subunits (but not with 30S subunits that are part of 70S ribosomes or polysomes). Required for efficient processing of 16S rRNA. May interact with the 5'-terminal helix region of 16S rRNA. This chain is Ribosome-binding factor A, found in Clavibacter michiganensis subsp. michiganensis (strain NCPPB 382).